The following is a 267-amino-acid chain: Phosphate import ATP-binding protein PstB 2 (267 aa).

Positions 21–262 (LSTKDVHVYY…AKLQSTNDYV (242 aa)) constitute an ABC transporter domain. 53 to 60 (GPSGSGKS) lines the ATP pocket.

The protein belongs to the ABC transporter superfamily. Phosphate importer (TC 3.A.1.7) family. The complex is composed of two ATP-binding proteins (PstB), two transmembrane proteins (PstC and PstA) and a solute-binding protein (PstS).

It is found in the cell membrane. The enzyme catalyses phosphate(out) + ATP + H2O = ADP + 2 phosphate(in) + H(+). Its function is as follows. Part of the ABC transporter complex PstSACB involved in phosphate import. Responsible for energy coupling to the transport system. This is Phosphate import ATP-binding protein PstB 2 from Streptococcus pneumoniae serotype 4 (strain ATCC BAA-334 / TIGR4).